The primary structure comprises 158 residues: Small ribosomal subunit protein uS17 (158 aa).

N-acetylalanine is present on A2. R22 carries the post-translational modification Citrulline. N6-acetyllysine is present on residues K38, K45, and K58. C60 carries the S-palmitoyl cysteine lipid modification. Phosphoserine is present on S67. Position 69 is an omega-N-methylarginine (R69). S110 carries the post-translational modification Phosphoserine.

This sequence belongs to the universal ribosomal protein uS17 family. Component of the small ribosomal subunit. Part of the small subunit (SSU) processome, composed of more than 70 proteins and the RNA chaperone small nucleolar RNA (snoRNA) U3. In terms of processing, citrullinated by PADI4.

Its subcellular location is the cytoplasm. It is found in the nucleus. The protein resides in the nucleolus. Functionally, component of the small ribosomal subunit. The ribosome is a large ribonucleoprotein complex responsible for the synthesis of proteins in the cell. Part of the small subunit (SSU) processome, first precursor of the small eukaryotic ribosomal subunit. During the assembly of the SSU processome in the nucleolus, many ribosome biogenesis factors, an RNA chaperone and ribosomal proteins associate with the nascent pre-rRNA and work in concert to generate RNA folding, modifications, rearrangements and cleavage as well as targeted degradation of pre-ribosomal RNA by the RNA exosome. The polypeptide is Small ribosomal subunit protein uS17 (Rps11) (Mus musculus (Mouse)).